Reading from the N-terminus, the 99-residue chain is Putative membrane protein insertion efficiency factor (99 aa).

The protein belongs to the UPF0161 family.

It localises to the cell membrane. Functionally, could be involved in insertion of integral membrane proteins into the membrane. The sequence is that of Putative membrane protein insertion efficiency factor from Corynebacterium efficiens (strain DSM 44549 / YS-314 / AJ 12310 / JCM 11189 / NBRC 100395).